A 348-amino-acid chain; its full sequence is Uroporphyrinogen decarboxylase (348 aa).

Substrate is bound by residues 27-31 (RQAGR), Phe46, Asp76, Tyr152, Ser207, and His320.

This sequence belongs to the uroporphyrinogen decarboxylase family. As to quaternary structure, homodimer.

Its subcellular location is the cytoplasm. It carries out the reaction uroporphyrinogen III + 4 H(+) = coproporphyrinogen III + 4 CO2. Its pathway is porphyrin-containing compound metabolism; protoporphyrin-IX biosynthesis; coproporphyrinogen-III from 5-aminolevulinate: step 4/4. Functionally, catalyzes the decarboxylation of four acetate groups of uroporphyrinogen-III to yield coproporphyrinogen-III. The polypeptide is Uroporphyrinogen decarboxylase (Bacillus cytotoxicus (strain DSM 22905 / CIP 110041 / 391-98 / NVH 391-98)).